The sequence spans 353 residues: MVQEKVRVSTRTLQWKCVEARADSKRLYYGRFILSPLMKGQADTIGIAMRRALLGEIEGTCITRAKSEKIPHEYSTLVGIQESVHEILMNLKEIILKSNLYGTCDASICIRGPGYVTAQDIISPPYVEIVDNTQHIASLAEPIDLCIGLQIERNRGYLIKTPNNNFQDGSYPIDAVFMPVRNANHSIHSYGNGNEKQEILFLEIWTNGSLTPKEALHQASRNLIDLFIPFLHTEEENLHLADNQHTVPLPPFTFHEKLTKLRKNKKKIALKSIFIDQSELPPRIYNCLIRSNIYTLLDLLNNSQEDLMKIEHFRIEDVKAILGILEKHFAIDLPKKLKIGFESLAQSIYSESG.

Residues Met1–Glu234 form an alpha N-terminal domain (alpha-NTD) region. Residues Lys266–Gly353 form an alpha C-terminal domain (alpha-CTD) region.

The protein belongs to the RNA polymerase alpha chain family. In plastids the minimal PEP RNA polymerase catalytic core is composed of four subunits: alpha, beta, beta', and beta''. When a (nuclear-encoded) sigma factor is associated with the core the holoenzyme is formed, which can initiate transcription.

The protein resides in the plastid. It is found in the chloroplast. It catalyses the reaction RNA(n) + a ribonucleoside 5'-triphosphate = RNA(n+1) + diphosphate. Its function is as follows. DNA-dependent RNA polymerase catalyzes the transcription of DNA into RNA using the four ribonucleoside triphosphates as substrates. This Panax ginseng (Korean ginseng) protein is DNA-directed RNA polymerase subunit alpha.